Consider the following 305-residue polypeptide: Cbb3-type cytochrome c oxidase subunit CcoP2 (305 aa).

2 helical membrane-spanning segments follow: residues 4–24 and 57–77; these read FWSW…VWLL and WWFM…VLYP. 2 Cytochrome c domains span residues 130-209 and 219-300; these read QALK…RSLS and VDIE…YSLS. Heme c-binding residues include Cys143, Cys146, His147, Met186, Cys232, Cys235, His236, and Met277.

In terms of assembly, component of the cbb3-type cytochrome c oxidase at least composed of CcoN, CcoO, CcoQ and CcoP. Heme c is required as a cofactor.

It is found in the cell inner membrane. Its pathway is energy metabolism; oxidative phosphorylation. Its function is as follows. C-type cytochrome. Part of the cbb3-type cytochrome c oxidase complex. CcoP subunit is required for transferring electrons from donor cytochrome c via its heme groups to CcoO subunit. From there, electrons are shuttled to the catalytic binuclear center of CcoN subunit where oxygen reduction takes place. The complex also functions as a proton pump. This is Cbb3-type cytochrome c oxidase subunit CcoP2 from Stutzerimonas stutzeri (Pseudomonas stutzeri).